Reading from the N-terminus, the 199-residue chain is Recombination protein RecR (199 aa).

The segment at 58–73 adopts a C4-type zinc-finger fold; sequence CVRCGNITNADLCGIC. Positions 81 to 176 constitute a Toprim domain; sequence GELCVVEDVA…QVTSLAQGVP (96 aa).

It belongs to the RecR family.

May play a role in DNA repair. It seems to be involved in an RecBC-independent recombinational process of DNA repair. It may act with RecF and RecO. This Cereibacter sphaeroides (strain ATCC 17029 / ATH 2.4.9) (Rhodobacter sphaeroides) protein is Recombination protein RecR.